A 200-amino-acid chain; its full sequence is Glycerol-3-phosphate acyltransferase (200 aa).

5 helical membrane-spanning segments follow: residues 3–23 (YIYSIFIGYFFGAIPFSFFIA), 50–70 (FYGALAFFFDIFKAYIAVFLV), 75–95 (IKFMLIAGTMAVLGHCYSIFL), 109–129 (VFLAVYPWSGLVFFGVWLFIV), and 134–154 (YVSLASMIGLIFASIFVFFAG).

Belongs to the PlsY family. As to quaternary structure, probably interacts with PlsX.

The protein localises to the cell inner membrane. It catalyses the reaction an acyl phosphate + sn-glycerol 3-phosphate = a 1-acyl-sn-glycero-3-phosphate + phosphate. It functions in the pathway lipid metabolism; phospholipid metabolism. Catalyzes the transfer of an acyl group from acyl-phosphate (acyl-PO(4)) to glycerol-3-phosphate (G3P) to form lysophosphatidic acid (LPA). This enzyme utilizes acyl-phosphate as fatty acyl donor, but not acyl-CoA or acyl-ACP. This chain is Glycerol-3-phosphate acyltransferase, found in Thermosipho melanesiensis (strain DSM 12029 / CIP 104789 / BI429).